Consider the following 408-residue polypeptide: Hepatocyte nuclear factor 4-gamma (408 aa).

Positions asparagine 9–asparagine 84 form a DNA-binding region, nuclear receptor. 2 NR C4-type zinc fingers span residues cysteine 12 to cysteine 32 and cysteine 48 to cysteine 72. Serine 94 carries the post-translational modification Phosphoserine. The region spanning serine 99–glycine 328 is the NR LBD domain. Positions isoleucine 368–alanine 390 are disordered. Threonine 370 and threonine 373 each carry phosphothreonine. Residue serine 377 is modified to Phosphoserine.

The protein belongs to the nuclear hormone receptor family. NR2 subfamily. Expressed in pancreas, kidney, small intestine and testis. Weakly expressed in colon. Not expressed in liver, skeletal muscle, lung, placenta, brain, heart, peripheral blood, ovary, prostate, thymus and spleen.

It localises to the nucleus. Functionally, transcription factor. Has a lower transcription activation potential than HNF4-alpha. This is Hepatocyte nuclear factor 4-gamma (HNF4G) from Homo sapiens (Human).